We begin with the raw amino-acid sequence, 688 residues long: Envelope glycoprotein gp70 (688 aa).

Polar residues predominate over residues 1-15 (MPNHQSGSPTGSSDL). Positions 1–31 (MPNHQSGSPTGSSDLLLSGKKQRPHLALRRK) are disordered. Positions 1-98 (MPNHQSGSPT…SVLGPPPVTG (98 aa)) are cleaved as a signal peptide. The span at 20 to 31 (KKQRPHLALRRK) shows a compositional bias: basic residues. Topologically, residues 99–624 (ESYWAYLPKP…ALNPLDWTQY (526 aa)) are extracellular. 2 N-linked (GlcNAc...) asparagine; by host glycosylation sites follow: N127 and N143. The stretch at 426–474 (LLPVDIGDEPWFDDSAIQTFRYATDLIRAKRFVAAIILGISALIAIITS) forms a coiled coil. Residues 455-456 (KR) constitute a propeptide that is removed on maturation. The tract at residues 457-477 (FVAAIILGISALIAIITSFAV) is fusion peptide. The immunosuppression stretch occupies residues 463 to 481 (LGISALIAIITSFAVATTA). N498 carries N-linked (GlcNAc...) asparagine; by host glycosylation. Residues 511–541 (LKLEARLNALEEVVLELGQDVANLKTRMSTR) adopt a coiled-coil conformation. N557 carries N-linked (GlcNAc...) asparagine; by host glycosylation. The helical transmembrane segment at 625–645 (FIFIGVGALLLVIVLMIFPIV) threads the bilayer. Over 646-688 (FQCLAKSLDQVQSDLNVLLLKKKKGGNAAPAAEMVELPRVSYT) the chain is Cytoplasmic.

As to quaternary structure, the mature envelope protein (Env) consists of a trimer of SU-TM heterodimers attached by noncovalent interactions or by a labile interchain disulfide bond. In terms of processing, specific enzymatic cleavages in vivo yield mature proteins. Envelope glycoproteins are synthesized as an inactive precursor that is N-glycosylated and processed likely by host cell furin or by a furin-like protease in the Golgi to yield the mature SU and TM proteins. The cleavage site between SU and TM requires the minimal sequence [KR]-X-[KR]-R.

It localises to the virion membrane. The protein localises to the host cell membrane. Functionally, the surface protein (SU) attaches the virus to the host cell by binding to its receptor. This interaction triggers the refolding of the transmembrane protein (TM) and is thought to activate its fusogenic potential by unmasking its fusion peptide. Fusion occurs at the host cell plasma membrane. In terms of biological role, the transmembrane protein (TM) acts as a class I viral fusion protein. Under the current model, the protein has at least 3 conformational states: pre-fusion native state, pre-hairpin intermediate state, and post-fusion hairpin state. During viral and target cell membrane fusion, the coiled coil regions (heptad repeats) assume a trimer-of-hairpins structure, positioning the fusion peptide in close proximity to the C-terminal region of the ectodomain. The formation of this structure appears to drive apposition and subsequent fusion of viral and target cell membranes. Membranes fusion leads to delivery of the nucleocapsid into the cytoplasm. This chain is Envelope glycoprotein gp70 (env), found in Mus musculus (Mouse).